The sequence spans 479 residues: Ribosomal RNA small subunit methyltransferase F (479 aa).

S-adenosyl-L-methionine-binding positions include 125 to 131, Glu-149, Asp-176, and Asp-194; that span reads AAAPGSK. The Nucleophile role is filled by Cys-247.

Belongs to the class I-like SAM-binding methyltransferase superfamily. RsmB/NOP family.

It is found in the cytoplasm. It carries out the reaction cytidine(1407) in 16S rRNA + S-adenosyl-L-methionine = 5-methylcytidine(1407) in 16S rRNA + S-adenosyl-L-homocysteine + H(+). In terms of biological role, specifically methylates the cytosine at position 1407 (m5C1407) of 16S rRNA. The chain is Ribosomal RNA small subunit methyltransferase F from Salmonella arizonae (strain ATCC BAA-731 / CDC346-86 / RSK2980).